The sequence spans 834 residues: Copper-exporting P-type ATPase (834 aa).

HMA domains lie at 3–64 and 99–162; these read QTID…YDAS and DSQQ…YGAE. Residues C14, C17, C110, and C113 each coordinate Cu(+). Helical transmembrane passes span 187–207, 218–238, 254–274, 284–304, 438–458, and 464–484; these read WQAI…MIGD, LWLV…GHFY, TLVA…NLWP, LYYE…MLEA, AVFV…WYFF, and IVYT…CALG. D523 functions as the 4-aspartylphosphate intermediate in the catalytic mechanism. Residues D720 and D724 each coordinate Mg(2+). 2 helical membrane-spanning segments follow: residues 779-799 and 801-821; these read LGAF…LWPF and GTLL…ITVV.

Belongs to the cation transport ATPase (P-type) (TC 3.A.3) family. Type IB subfamily.

It localises to the cell inner membrane. Its subcellular location is the cytoplasm. The catalysed reaction is Cu(+)(in) + ATP + H2O = Cu(+)(out) + ADP + phosphate + H(+). Its function is as follows. Involved in Cu(+) export. In terms of biological role, probably also encodes a cytoplasmic copper chaperone CopA(Z) that is produced by programmed ribosomal frameshifting. This is Copper-exporting P-type ATPase (copA) from Escherichia coli O157:H7.